The chain runs to 483 residues: BTB/POZ domain and ankyrin repeat-containing protein NBCL (483 aa).

Positions 25 to 109 (SDVTFSVEGR…LYSGQVSIVP (85 aa)) constitute a BTB domain. A C2HC NPR-type zinc finger spans residues 115–129 (RPNCGERACWHTHCT). Cys118, Cys123, His125, and Cys128 together coordinate Zn(2+). ANK repeat units follow at residues 254 to 283 (QKIR…LNLD), 284 to 313 (EALA…DVNY), 318 to 347 (SGKT…DPNV), and 351 to 385 (DGVT…KLRL). Residues 401-437 (EGNANANSSNNNNAPCSAATPIYPPMNEDHNSSSSNA) are disordered. Over residues 403 to 419 (NANANSSNNNNAPCSAA) the composition is skewed to low complexity.

This sequence belongs to the plant 'ANKYRIN-BTB/POZ' family. 'NOOT-BOP-COCH-like' (NBCL) subfamily. As to quaternary structure, homodimer. Interacts with APP1 around the plasma membrane and in the nucleus; this interaction disturbs APP1-mediated regulation of the nuclear transcription factor Y subunit (NF-YA1). Mainly expressed in root nodules, to a lesser extent in shoot apical meristems (SAM) and root meristems (RM), and barely in leaves, non-nodulating roots and root apical meristems (RAM).

It is found in the nucleus. Its subcellular location is the cytoplasm. The protein resides in the cell membrane. Its pathway is protein modification; protein ubiquitination. In terms of biological role, may act as a substrate-specific adapter of an E3 ubiquitin-protein ligase complex (CUL3-RBX1-BTB) which mediates the ubiquitination and subsequent proteasomal degradation of target proteins. Transcriptional co-regulator involved in the promotion of leaf and floral meristem fate and determinacy. Required for the abscission of senescent organs, probably by regulating the cell wall disorganization in abscission zones (AZs, e.g. pulvini at the base of leaves). Involved in the coordination of the symbiotic nodule developmental program; promotes the formation of root nodules by interacting directly with APP1 to modulate the expression of the nuclear transcription factor Y subunit (NF-YA1), a key nodulin. Necessary for the robust maintenance of nodule identity throughout the nodule developmental program. This is BTB/POZ domain and ankyrin repeat-containing protein NBCL from Lotus japonicus (Lotus corniculatus var. japonicus).